Consider the following 224-residue polypeptide: 4'-phosphopantetheinyl transferase (224 aa).

Positions 107, 109, and 151 each coordinate Mg(2+). A peptidyl carrier protein binding region spans residues 158 to 189 (GKGLSLPLDSFSVRLKDDGHVSIELPDGHEPC).

This sequence belongs to the P-Pant transferase superfamily. Gsp/Sfp/HetI/AcpT family. Mg(2+) serves as cofactor.

It carries out the reaction apo-[peptidyl-carrier protein] + CoA = holo-[peptidyl-carrier protein] + adenosine 3',5'-bisphosphate + H(+). In terms of biological role, may activate the peptidyl carrier protein (PCP) domains of surfactin synthetase SRF1/2/3 and iturin A synthetase, by transferring the 4'-phosphopantetheinyl moiety of coenzyme A (CoA) to a serine residue. Required for the coproduction of the lipopeptide antibiotics, iturin A and surfactin. This is 4'-phosphopantetheinyl transferase (lpa-14) from Bacillus subtilis.